Consider the following 515-residue polypeptide: Anthranilate synthase component 1 (515 aa).

L-tryptophan contacts are provided by residues Ser50 and 281 to 283 (PYM). 316–317 (GT) lines the chorismate pocket. Glu343 is a Mg(2+) binding site. Residues Tyr431, Arg451, 465–467 (GAG), and Gly467 contribute to the chorismate site. Glu480 is a Mg(2+) binding site.

Belongs to the anthranilate synthase component I family. As to quaternary structure, heterotetramer consisting of two non-identical subunits: a beta subunit (TrpG) and a large alpha subunit (TrpE). The cofactor is Mg(2+).

It carries out the reaction chorismate + L-glutamine = anthranilate + pyruvate + L-glutamate + H(+). It participates in amino-acid biosynthesis; L-tryptophan biosynthesis; L-tryptophan from chorismate: step 1/5. Its activity is regulated as follows. Feedback inhibited by tryptophan. In terms of biological role, part of a heterotetrameric complex that catalyzes the two-step biosynthesis of anthranilate, an intermediate in the biosynthesis of L-tryptophan. In the first step, the glutamine-binding beta subunit (TrpG) of anthranilate synthase (AS) provides the glutamine amidotransferase activity which generates ammonia as a substrate that, along with chorismate, is used in the second step, catalyzed by the large alpha subunit of AS (TrpE) to produce anthranilate. In the absence of TrpG, TrpE can synthesize anthranilate directly from chorismate and high concentrations of ammonia. This is Anthranilate synthase component 1 (trpE) from Bacillus subtilis (strain 168).